The primary structure comprises 248 residues: 1-(5-phosphoribosyl)-5-[(5-phosphoribosylamino)methylideneamino] imidazole-4-carboxamide isomerase (248 aa).

D17 (proton acceptor) is an active-site residue. The active-site Proton donor is the D136.

The protein belongs to the HisA/HisF family.

The protein localises to the cytoplasm. The catalysed reaction is 1-(5-phospho-beta-D-ribosyl)-5-[(5-phospho-beta-D-ribosylamino)methylideneamino]imidazole-4-carboxamide = 5-[(5-phospho-1-deoxy-D-ribulos-1-ylimino)methylamino]-1-(5-phospho-beta-D-ribosyl)imidazole-4-carboxamide. It functions in the pathway amino-acid biosynthesis; L-histidine biosynthesis; L-histidine from 5-phospho-alpha-D-ribose 1-diphosphate: step 4/9. This is 1-(5-phosphoribosyl)-5-[(5-phosphoribosylamino)methylideneamino] imidazole-4-carboxamide isomerase from Arthrobacter sp. (strain FB24).